We begin with the raw amino-acid sequence, 470 residues long: ATP synthase subunit beta (470 aa).

Position 155 to 162 (glycine 155 to threonine 162) interacts with ATP.

This sequence belongs to the ATPase alpha/beta chains family. In terms of assembly, F-type ATPases have 2 components, CF(1) - the catalytic core - and CF(0) - the membrane proton channel. CF(1) has five subunits: alpha(3), beta(3), gamma(1), delta(1), epsilon(1). CF(0) has three main subunits: a(1), b(2) and c(9-12). The alpha and beta chains form an alternating ring which encloses part of the gamma chain. CF(1) is attached to CF(0) by a central stalk formed by the gamma and epsilon chains, while a peripheral stalk is formed by the delta and b chains.

The protein resides in the cell membrane. The catalysed reaction is ATP + H2O + 4 H(+)(in) = ADP + phosphate + 5 H(+)(out). In terms of biological role, produces ATP from ADP in the presence of a proton gradient across the membrane. The catalytic sites are hosted primarily by the beta subunits. The protein is ATP synthase subunit beta of Staphylococcus saprophyticus subsp. saprophyticus (strain ATCC 15305 / DSM 20229 / NCIMB 8711 / NCTC 7292 / S-41).